Consider the following 153-residue polypeptide: Holo-[acyl-carrier-protein] synthase (153 aa).

Mg(2+) is bound by residues aspartate 24 and glutamate 78.

Belongs to the P-Pant transferase superfamily. AcpS family. Mg(2+) is required as a cofactor.

The protein resides in the cytoplasm. The enzyme catalyses apo-[ACP] + CoA = holo-[ACP] + adenosine 3',5'-bisphosphate + H(+). Transfers the 4'-phosphopantetheine moiety from coenzyme A to a Ser of acyl-carrier-protein. The polypeptide is Holo-[acyl-carrier-protein] synthase (Bordetella parapertussis (strain 12822 / ATCC BAA-587 / NCTC 13253)).